Reading from the N-terminus, the 875-residue chain is Alanine--tRNA ligase (875 aa).

4 residues coordinate Zn(2+): histidine 564, histidine 568, cysteine 666, and histidine 670.

It belongs to the class-II aminoacyl-tRNA synthetase family. In terms of assembly, homotetramer. Zn(2+) is required as a cofactor.

It is found in the cytoplasm. The enzyme catalyses tRNA(Ala) + L-alanine + ATP = L-alanyl-tRNA(Ala) + AMP + diphosphate. Functionally, catalyzes the attachment of alanine to tRNA(Ala) in a two-step reaction: alanine is first activated by ATP to form Ala-AMP and then transferred to the acceptor end of tRNA(Ala). Also edits incorrectly charged Ser-tRNA(Ala) and Gly-tRNA(Ala) via its editing domain. This chain is Alanine--tRNA ligase, found in Yersinia pseudotuberculosis serotype O:1b (strain IP 31758).